The primary structure comprises 670 residues: MESLQDKITHLRTLLRHYEYQYHVLDAPAVPDAEYDRLMGELRELEAAHPELLTTDSPTQRVGAAPLSAFEQVRHEVPMLSLDNAFDEESYRAFNKRVQDRLKSSDDLTFCCELKLDGLAVSLLYEQGELVRAATRGDGTTGENITANVRTIRAIPLRLSGDNIPERLEVRGEVFMPLAGFEKMNEQARRGGQKIFANPRNAAAGSLRQLDPRITAKRPLTFFCYGLGLLEGGEMPRSHMARLQQFKAWGLPVSDRVRLCHSPSDVLDFYHQVEADRPALGFDIDGVVIKVDSLEQQEQLGFVARAPRWAVAFKFPAQEQITTVRDVEFQVGRTGAITPVARLEPVLVAGVMVSNATLHNADEIERLGLRIGDRVVIRRAGDVIPQVMSVVESAEGARDVIFPTHCPVCGSDVERVEGEVVARCTGGLICGAQRKGALKHFVSRRALDIDGMGEKIIDQLVDKEYVKNPAELFELTAGKLTGLDRMGPKSAQNVVDALAKAKQTTFARFLYALGISEVGEATAANLAAHFGTLEALMAADIDTLITVPDVGKVVASHVRNFLDEESNREIIRLLVEKAGVNWPDVVVVKAEEIDSPFAGKTVVLTGSLSILSRDDAKERLQALGAKVSGSVSKKTDLVIAGEAAGSKLAKAQELGIDVIDEQEMMRLLGE.

Residues 32–36 (DAEYD), 81–82 (SL), and Glu-113 contribute to the NAD(+) site. Lys-115 (N6-AMP-lysine intermediate) is an active-site residue. 4 residues coordinate NAD(+): Arg-136, Glu-173, Lys-290, and Lys-314. Cys-406, Cys-409, Cys-424, and Cys-430 together coordinate Zn(2+). In terms of domain architecture, BRCT spans 592 to 670 (EIDSPFAGKT…EQEMMRLLGE (79 aa)).

The protein belongs to the NAD-dependent DNA ligase family. LigA subfamily. Mg(2+) serves as cofactor. The cofactor is Mn(2+).

The catalysed reaction is NAD(+) + (deoxyribonucleotide)n-3'-hydroxyl + 5'-phospho-(deoxyribonucleotide)m = (deoxyribonucleotide)n+m + AMP + beta-nicotinamide D-nucleotide.. DNA ligase that catalyzes the formation of phosphodiester linkages between 5'-phosphoryl and 3'-hydroxyl groups in double-stranded DNA using NAD as a coenzyme and as the energy source for the reaction. It is essential for DNA replication and repair of damaged DNA. This Erwinia tasmaniensis (strain DSM 17950 / CFBP 7177 / CIP 109463 / NCPPB 4357 / Et1/99) protein is DNA ligase.